The primary structure comprises 281 residues: Putative integrase/recombinase y4rD (281 aa).

The Core-binding (CB) domain maps to 5 to 98; the sequence is LLLAPLLESY…AIRSFFHHVA (94 aa). In terms of domain architecture, Tyr recombinase spans 122–281; that stretch reads EVTHHLTKAE…TMSGTENASV (160 aa). Active-site residues include R162, K188, H262, and R265.

Belongs to the 'phage' integrase family.

In terms of biological role, seems to be non-functional. The sequence is that of Putative integrase/recombinase y4rD from Sinorhizobium fredii (strain NBRC 101917 / NGR234).